The sequence spans 246 residues: NH(3)-dependent NAD(+) synthetase (246 aa).

Residue 29 to 36 coordinates ATP; it reads GLSGGIDS. D35 is a binding site for Mg(2+). Deamido-NAD(+) is bound at residue R110. T130 contributes to the ATP binding site. E135 is a Mg(2+) binding site. ATP is bound by residues K159 and S181.

Belongs to the NAD synthetase family. Homodimer.

It catalyses the reaction deamido-NAD(+) + NH4(+) + ATP = AMP + diphosphate + NAD(+) + H(+). The protein operates within cofactor biosynthesis; NAD(+) biosynthesis; NAD(+) from deamido-NAD(+) (ammonia route): step 1/1. Catalyzes the ATP-dependent amidation of deamido-NAD to form NAD. Uses ammonia as a nitrogen source. This Campylobacter jejuni subsp. jejuni serotype O:23/36 (strain 81-176) protein is NH(3)-dependent NAD(+) synthetase.